Consider the following 162-residue polypeptide: NADH-quinone oxidoreductase subunit I (162 aa).

4Fe-4S ferredoxin-type domains lie at 54–83 and 93–122; these read RRYE…IESE and TRYD…ETQI. Positions 63, 66, 69, 73, 102, 105, 108, and 112 each coordinate [4Fe-4S] cluster.

It belongs to the complex I 23 kDa subunit family. In terms of assembly, NDH-1 is composed of 14 different subunits. Subunits NuoA, H, J, K, L, M, N constitute the membrane sector of the complex. It depends on [4Fe-4S] cluster as a cofactor.

The protein resides in the cell inner membrane. It catalyses the reaction a quinone + NADH + 5 H(+)(in) = a quinol + NAD(+) + 4 H(+)(out). NDH-1 shuttles electrons from NADH, via FMN and iron-sulfur (Fe-S) centers, to quinones in the respiratory chain. The immediate electron acceptor for the enzyme in this species is believed to be ubiquinone. Couples the redox reaction to proton translocation (for every two electrons transferred, four hydrogen ions are translocated across the cytoplasmic membrane), and thus conserves the redox energy in a proton gradient. The sequence is that of NADH-quinone oxidoreductase subunit I from Burkholderia pseudomallei (strain 668).